Here is a 61-residue protein sequence, read N- to C-terminus: Peroxidase 1 (61 aa).

Positions 1–32 (DNTAKEKDSPANLSLRTCAAGDNAEQPLDPSR) are disordered. The N-linked (GlcNAc...) asparagine glycan is linked to asparagine 12. Ca(2+) contacts are provided by aspartate 29, serine 31, and aspartate 36.

Belongs to the peroxidase family. Classical plant (class III) peroxidase subfamily. Ca(2+) is required as a cofactor. It depends on heme b as a cofactor.

It localises to the secreted. It catalyses the reaction 2 a phenolic donor + H2O2 = 2 a phenolic radical donor + 2 H2O. Functionally, removal of H(2)O(2), oxidation of toxic reductants, biosynthesis and degradation of lignin, suberization, auxin catabolism, response to environmental stresses such as wounding, pathogen attack and oxidative stress. These functions might be dependent on each isozyme/isoform in each plant tissue. The protein is Peroxidase 1 of Vitis rotundifolia (Muscadine grape).